A 348-amino-acid chain; its full sequence is MNLNKILKLIPKTDLHCHLDGSLRPETILDIAYKENIPLPNKELANFQEEIKVIGKCTSLKEYLNKFNLPIQIMQKEEHIYRVTLELLEDALKQNIKYIEIRFAPFNHLKDGLTLDQVINTVLTAMNYGRTHLNIMSNLILCILRQEPVEKGIELVNTAKKYVGKGVVAVDLAGNESDFPPEIHEEAFTLARKYGLHRTVHAGETGLPENIIKSINILGAERIGHGTYAYKDKEIITCLKENRIPLEVCITSNVNTSAVTSYQEHPIKKYLDEDLIITVNTDNTTVSNTNLIEEFNYLIKYQSFRFDDIKKVIKNGIESSFASKEDINKLYEEYLSAINVIELTNPIL.

2 residues coordinate Zn(2+): His16 and His18. The substrate site is built by His18, Asp20, and Gly174. Residue His201 participates in Zn(2+) binding. Glu204 functions as the Proton donor in the catalytic mechanism. Asp282 serves as a coordination point for Zn(2+).

This sequence belongs to the metallo-dependent hydrolases superfamily. Adenosine and AMP deaminases family. Adenosine deaminase subfamily. Zn(2+) is required as a cofactor.

It catalyses the reaction adenosine + H2O + H(+) = inosine + NH4(+). It carries out the reaction 2'-deoxyadenosine + H2O + H(+) = 2'-deoxyinosine + NH4(+). Its function is as follows. Catalyzes the hydrolytic deamination of adenosine and 2-deoxyadenosine. This is Adenosine deaminase from Clostridium kluyveri (strain ATCC 8527 / DSM 555 / NBRC 12016 / NCIMB 10680 / K1).